Reading from the N-terminus, the 365-residue chain is Alanine racemase (365 aa).

Residue lysine 35 is the Proton acceptor; specific for D-alanine of the active site. The residue at position 35 (lysine 35) is an N6-(pyridoxal phosphate)lysine. Residue arginine 130 participates in substrate binding. Tyrosine 256 serves as the catalytic Proton acceptor; specific for L-alanine. Methionine 304 provides a ligand contact to substrate.

This sequence belongs to the alanine racemase family. The cofactor is pyridoxal 5'-phosphate.

It carries out the reaction L-alanine = D-alanine. It functions in the pathway amino-acid biosynthesis; D-alanine biosynthesis; D-alanine from L-alanine: step 1/1. In terms of biological role, catalyzes the interconversion of L-alanine and D-alanine. May also act on other amino acids. This is Alanine racemase (alr) from Acidovorax ebreus (strain TPSY) (Diaphorobacter sp. (strain TPSY)).